Reading from the N-terminus, the 924-residue chain is Phosphatidate phosphatase LPIN1 (924 aa).

The N-LIP stretch occupies residues 1-108 (MNYVGQLAGQ…IPMYLATSPI (108 aa)). Residues S106 and S150 each carry the phosphoserine modification. Disordered regions lie at residues 133-248 (PTTA…DCQR) and 269-297 (FHAS…ADRL). Residues 152 to 161 (GKKRRKRRRK) show a composition bias toward basic residues. A Nuclear localization signal motif is present at residues 153–158 (KKRRKR). The span at 162-172 (AQLDNLKRDDN) shows a compositional bias: basic and acidic residues. Over residues 176 to 193 (SEDEDMFPIEMSSDEDTA) the composition is skewed to acidic residues. Polar residues-rich tracts occupy residues 218 to 229 (PSISTHPQSASY) and 273 to 284 (ESPSGSRPSTPK). S285, S287, and S293 each carry phosphoserine. Basic and acidic residues predominate over residues 285–297 (SDSELVSKSADRL). Residue T298 is modified to Phosphothreonine. Disordered regions lie at residues 314–426 (QAAK…SRHL) and 446–490 (LYFP…STSD). Position 328 is a phosphoserine (S328). Polar residues predominate over residues 343–358 (AIHSESSDTFSDQSPT). Phosphoserine is present on S392. The span at 404 to 413 (NTAQSSSKTD) shows a compositional bias: polar residues. At K459 the chain carries N6-acetyllysine. The segment covering 461–476 (ASDNGARSANQSPQSV) has biased composition (polar residues). Residues S468, S472, and S483 each carry the phosphoserine modification. Residues K599 and K629 each participate in a glycyl lysine isopeptide (Lys-Gly) (interchain with G-Cter in SUMO) cross-link. Positions 627-649 (RIKHESSSSDEEHAAAKPSGSSH) are disordered. Over residues 628–641 (IKHESSSSDEEHAA) the composition is skewed to basic and acidic residues. K629 is subject to N6-acetyllysine. Residues S634 and S635 each carry the phosphoserine modification. A C-LIP region spans residues 658–864 (YKKTLRLTSE…VNPKGELVQE (207 aa)). The short motif at 712 to 716 (DIDGT) is the DXDXT motif element. Positions 723 to 727 (LGHIL) match the LXXIL motif motif. Residues S921 and S923 each carry the phosphoserine modification.

The protein belongs to the lipin family. Interacts (via LXXIL motif) with PPARA. Interacts with PPARGC1A. Interaction with PPARA and PPARGC1A leads to the formation of a complex that modulates gene transcription. Interacts with MEF2C. The cofactor is Mg(2+). Post-translationally, phosphorylated at multiple sites in response to insulin. Phosphorylation is controlled by the mTOR signaling pathway. Phosphorylation is decreased by epinephrine. Phosphorylation may not directly affect the catalytic activity but may regulate the localization. Dephosphorylated by the CTDNEP1-CNEP1R1 complex. In terms of processing, phosphorylated at multiple sites by mTOR in response to insulin, leading to its inactivation. Phosphorylation does not affect the catalytic activity but regulates the localization. Phosphorylation is decreased by epinephrine. Dephosphorylated by the CTDNEP1-CNEP1R1 complex. Dephosphorylation following mTOR inhibition promotes its activity. Sumoylation is important in brain and is marginal in other tissues. Sumoylation facilitates nuclear localization of isoform 2 in neuronals cells and its transcriptional coactivator activity. Post-translationally, acetylation at Lys-459 and Lys-629 by KAT5 in response to fatty acids promotes translocation to the endoplasmic reticulum and synthesis of diacylglycerol. Specifically expressed in skeletal muscle. Also expressed prominently in adipose tissue, and testis. Lower expression also detected in kidney, lung, brain and liver. In terms of tissue distribution, predominant isoform in the liver. As to expression, predominant isoform in the brain.

It is found in the mitochondrion outer membrane. Its subcellular location is the cytoplasm. The protein resides in the nucleus membrane. The protein localises to the nucleus. It localises to the endoplasmic reticulum membrane. The enzyme catalyses a 1,2-diacyl-sn-glycero-3-phosphate + H2O = a 1,2-diacyl-sn-glycerol + phosphate. It carries out the reaction 1-octadecanoyl-2-(4Z,7Z,10Z,13Z,16Z,19Z-docosahexaenoyl)-sn-glycero-3-phosphate + H2O = 1-octadecanoyl-2-(4Z,7Z,10Z,13Z,16Z,19Z-docosahexaenoyl)-sn-glycerol + phosphate. The catalysed reaction is 1-octadecanoyl-2-(5Z,8Z,11Z,14Z-eicosatetraenoyl)-sn-glycero-3-phosphate + H2O = 1-octadecanoyl-2-(5Z,8Z,11Z,14Z-eicosatetraenoyl)-sn-glycerol + phosphate. It catalyses the reaction 1-octadecanoyl-2-(9Z,12Z-octadecadienoyl)-sn-glycero-3-phosphate + H2O = 1-octadecanoyl-2-(9Z,12Z)-octadecadienoyl-sn-glycerol + phosphate. The enzyme catalyses 1-octadecanoyl-2-(9Z-octadecenoyl)-sn-glycero-3-phosphate + H2O = 1-octadecanoyl-2-(9Z-octadecenoyl)-sn-glycerol + phosphate. It carries out the reaction 1-hexadecanoyl-2-(4Z,7Z,10Z,13Z,16Z,19Z-docosahexaenoyl)-sn-glycero-3-phosphate + H2O = 1-hexadecanoyl-2-(4Z,7Z,10Z,13Z,16Z,19Z-docosahexaenoyl)-sn-glycerol + phosphate. The catalysed reaction is 1,2-dioctadecanoyl-sn-glycero-3-phosphate + H2O = 1,2-dioctadecanoyl-sn-glycerol + phosphate. It catalyses the reaction 1-hexadecanoyl-2-(5Z,8Z,11Z,14Z-eicosatetraenoyl)-sn-glycero-3-phosphate + H2O = 1-hexadecanoyl-2-(5Z,8Z,11Z,14Z-eicosatetraenoyl)-sn-glycerol + phosphate. The enzyme catalyses 1-hexadecanoyl-2-(9Z,12Z-octadecadienoyl)-sn-glycero-3-phosphate + H2O = 1-hexadecanoyl-2-(9Z,12Z-octadecadienoyl)-sn-glycerol + phosphate. It carries out the reaction 1-hexadecanoyl-2-(9Z-octadecenoyl)-sn-glycero-3-phosphate + H2O = 1-hexadecanoyl-2-(9Z-octadecenoyl)-sn-glycerol + phosphate. The catalysed reaction is 1,2-di-(4Z,7Z,10Z,13Z,16Z,19Z-docosahexaenoyl)-sn-glycero-3-phosphate + H2O = 1,2-di-(4Z,7Z,10Z,13Z,16Z,19Z-docosahexaenoyl)-sn-glycerol + phosphate. It catalyses the reaction 1,2-di-(5Z,8Z,11Z,14Z)-eicosatetraenoyl-sn-glycero-3-phosphate + H2O = 1,2-di-(5Z,8Z,11Z,14Z)-eicosatetraenoyl-sn-glycerol + phosphate. The enzyme catalyses 1,2-di-(9Z,12Z-octadecadienoyl)-sn-glycero-3-phosphate + H2O = 1,2-di-(9Z,12Z-octadecadienoyl)-sn-glycerol + phosphate. It carries out the reaction 1,2-di-(9Z-octadecenoyl)-sn-glycero-3-phosphate + H2O = 1,2-di-(9Z-octadecenoyl)-sn-glycerol + phosphate. The catalysed reaction is 1,2-dihexadecanoyl-sn-glycero-3-phosphate + H2O = 1,2-dihexadecanoyl-sn-glycerol + phosphate. Inhibited by N-ethylmaleimide treatment. Acts as a magnesium-dependent phosphatidate phosphatase enzyme which catalyzes the conversion of phosphatidic acid to diacylglycerol during triglyceride, phosphatidylcholine and phosphatidylethanolamine biosynthesis and therefore controls the metabolism of fatty acids at different levels. Is involved in adipocyte differentiation. Also acts as nuclear transcriptional coactivator for PPARGC1A/PPARA regulatory pathway to modulate lipid metabolism gene expression. Its function is as follows. Recruited at the mitochondrion outer membrane and is involved in mitochondrial fission by converting phosphatidic acid to diacylglycerol. This is Phosphatidate phosphatase LPIN1 (Lpin1) from Mus musculus (Mouse).